Reading from the N-terminus, the 213-residue chain is Protein DMP4 (213 aa).

Helical transmembrane passes span 51–71 (LANL…PIFS), 78–98 (LVSK…CFIL), 142–162 (FIDF…VLFD), and 180–200 (VLTA…ATFP).

The protein belongs to the plant DMP1 protein family. Expressed in leaves, flowers and siliques, especially in vascular tissues.

It localises to the vacuole membrane. Its function is as follows. Involved in membrane remodeling. In Arabidopsis thaliana (Mouse-ear cress), this protein is Protein DMP4.